A 270-amino-acid chain; its full sequence is Phosphonates import ATP-binding protein PhnC (270 aa).

The ABC transporter domain occupies L2 to A245. G34–S41 serves as a coordination point for ATP.

This sequence belongs to the ABC transporter superfamily. Phosphonates importer (TC 3.A.1.9.1) family. The complex is composed of two ATP-binding proteins (PhnC), two transmembrane proteins (PhnE) and a solute-binding protein (PhnD).

It localises to the cell inner membrane. It carries out the reaction phosphonate(out) + ATP + H2O = phosphonate(in) + ADP + phosphate + H(+). Functionally, part of the ABC transporter complex PhnCDE involved in phosphonates import. Responsible for energy coupling to the transport system. The chain is Phosphonates import ATP-binding protein PhnC from Rhodopseudomonas palustris (strain BisB5).